The chain runs to 207 residues: Glycerol-3-phosphate acyltransferase (207 aa).

A run of 5 helical transmembrane segments spans residues 4-24, 58-78, 86-106, 120-140, and 162-182; these read VVATVIFALAAYLIGSISFAV, ILTLLGDAAKGGLAVWLAQWL, ETGIALVVIAVFLGHLFPVFH, ILLALNVWLGLATLATWLIIA, and VLMNGFDWIAGAVALMAVLLI.

The protein belongs to the PlsY family. Probably interacts with PlsX.

It is found in the cell inner membrane. The catalysed reaction is an acyl phosphate + sn-glycerol 3-phosphate = a 1-acyl-sn-glycero-3-phosphate + phosphate. It functions in the pathway lipid metabolism; phospholipid metabolism. Functionally, catalyzes the transfer of an acyl group from acyl-phosphate (acyl-PO(4)) to glycerol-3-phosphate (G3P) to form lysophosphatidic acid (LPA). This enzyme utilizes acyl-phosphate as fatty acyl donor, but not acyl-CoA or acyl-ACP. The polypeptide is Glycerol-3-phosphate acyltransferase (Ralstonia pickettii (strain 12J)).